A 352-amino-acid polypeptide reads, in one-letter code: Ion-translocating oxidoreductase complex subunit D (352 aa).

4 consecutive transmembrane segments (helical) span residues 20–40, 42–62, 69–91, and 123–143; these read IMLL…WFFG, GTLF…AIVL, VASH…SIPP, and PAMI…TSWL. Thr187 is modified (FMN phosphoryl threonine). 5 helical membrane-spanning segments follow: residues 215–235, 242–262, 267–287, 301–321, and 322–342; these read LAGV…VFLL, WHIP…GWLF, LASP…FFIL, LIFG…GGYP, and DGVA…DYYT.

It belongs to the NqrB/RnfD family. As to quaternary structure, the complex is composed of six subunits: RsxA, RsxB, RsxC, RsxD, RsxE and RsxG. FMN serves as cofactor.

The protein resides in the cell inner membrane. In terms of biological role, part of a membrane-bound complex that couples electron transfer with translocation of ions across the membrane. Required to maintain the reduced state of SoxR. The protein is Ion-translocating oxidoreductase complex subunit D of Salmonella paratyphi B (strain ATCC BAA-1250 / SPB7).